We begin with the raw amino-acid sequence, 32 residues long: ilv operon leader peptide (32 aa).

Its function is as follows. This protein is involved in control of the biosynthesis of isoleucine, leucine, and valine. The sequence is that of ilv operon leader peptide (ivbL) from Escherichia coli (strain K12).